Here is a 738-residue protein sequence, read N- to C-terminus: Nucleoprotein (738 aa).

Positions Val334 to Leu363 form a coiled coil. Positions Gly418 to Ile640 are disordered. Residues Pro461–Ala476 are compositionally biased toward acidic residues. A compositionally biased stretch (polar residues) spans Pro544–Pro564. The span at Glu567 to Glu594 shows a compositional bias: acidic residues. Positions Val616–Ser625 are enriched in polar residues.

Belongs to the filoviruses nucleoprotein family. In terms of assembly, homooligomer. Homomultimerizes to form the nucleocapsid. Binds to viral genomic RNA. Interacts with VP35 and VP30 to form the nucleocapsid. Interacts with host PPP2R5C; this interaction leads to VP30 dephosphorylation and viral transcription. Interacts with VP24; this interaction facilitates nucleocapsid assembly and genome packaging. Interacts with matrix protein VP40; this interaction allows recruitment of the nucleocapsid into progeny virions. Interacts with host STAU1. Interacts with host NXF1 (via RNA-binding domain); this interaction recruits NXF1 to the inclusion bodies were viral replication takes place, probably to export viral mRNA-NXF1 complexes from these sites. Interacts with host CCDC92; this interaction sequesters NP in the host cytoplasm. Interacts with host TRIM14. Phosphorylated and O-glycosylated by host. Acetylated by host EP300 in vitro.

It is found in the virion. It localises to the host cytoplasm. Oligomerizes into helical capsid to encapsidate the viral genome, protecting it from nucleases and the cellular innate immune response. VP35 binds to and stabilizes monomeric NP, keeping it soluble. Upon virus replication, NP is recruited to bind cooperatively viral genomic RNA and VP35 is released. The encapsidated genomic RNA is termed the nucleocapsid and serves as template for transcription and replication. The nucleocapsid is helical with a pitch of 10.81 NP per turn and a diameter of about 22nm. Each NP binds to six nucleotides of viral genomic RNA, three being exposed to the solvant and three hidden into the nucleocapsid. Also recruits host PPP2R5C phosphatase to dephosphorylate VP30 and thereby promote viral transcription. Upon virion assembly and budding, NP binds to VP24 and possibly host STAU1. In Sudan ebolavirus (strain Human/Uganda/Gulu/2000) (SEBOV), this protein is Nucleoprotein (NP).